The chain runs to 419 residues: GTPase Obg (419 aa).

The region spanning 1–158 (MFVDQARIFV…KWIRLELKLL (158 aa)) is the Obg domain. The OBG-type G domain maps to 159–327 (ADVGLVGFPN…LMGKTYALLQ (169 aa)). Residues 165 to 172 (GFPNAGKS), 190 to 194 (FTTLV), 212 to 215 (DIPG), 282 to 285 (NKMD), and 308 to 310 (SAV) each bind GTP. Positions 172 and 192 each coordinate Mg(2+). In terms of domain architecture, OCT spans 342-419 (RRFEEELPFK…IKDFEFEFTE (78 aa)).

Belongs to the TRAFAC class OBG-HflX-like GTPase superfamily. OBG GTPase family. In terms of assembly, monomer. Mg(2+) serves as cofactor.

The protein localises to the cytoplasm. Its function is as follows. An essential GTPase which binds GTP, GDP and possibly (p)ppGpp with moderate affinity, with high nucleotide exchange rates and a fairly low GTP hydrolysis rate. Plays a role in control of the cell cycle, stress response, ribosome biogenesis and in those bacteria that undergo differentiation, in morphogenesis control. The protein is GTPase Obg of Syntrophomonas wolfei subsp. wolfei (strain DSM 2245B / Goettingen).